Consider the following 385-residue polypeptide: Succinate--CoA ligase [ADP-forming] subunit beta (385 aa).

In terms of domain architecture, ATP-grasp spans 9-244 (KALFRTFGVP…LDEEDPLEVE (236 aa)). ATP contacts are provided by residues K46, 53-55 (GRG), E99, Q102, and E107. Mg(2+) contacts are provided by N199 and D213. Residues N264 and 321–323 (GIL) each bind substrate.

The protein belongs to the succinate/malate CoA ligase beta subunit family. As to quaternary structure, heterotetramer of two alpha and two beta subunits. Requires Mg(2+) as cofactor.

It carries out the reaction succinate + ATP + CoA = succinyl-CoA + ADP + phosphate. It catalyses the reaction GTP + succinate + CoA = succinyl-CoA + GDP + phosphate. The protein operates within carbohydrate metabolism; tricarboxylic acid cycle; succinate from succinyl-CoA (ligase route): step 1/1. In terms of biological role, succinyl-CoA synthetase functions in the citric acid cycle (TCA), coupling the hydrolysis of succinyl-CoA to the synthesis of either ATP or GTP and thus represents the only step of substrate-level phosphorylation in the TCA. The beta subunit provides nucleotide specificity of the enzyme and binds the substrate succinate, while the binding sites for coenzyme A and phosphate are found in the alpha subunit. The polypeptide is Succinate--CoA ligase [ADP-forming] subunit beta (Desulforapulum autotrophicum (strain ATCC 43914 / DSM 3382 / VKM B-1955 / HRM2) (Desulfobacterium autotrophicum)).